Reading from the N-terminus, the 414-residue chain is tRNA(Ile)-lysidine synthase (414 aa).

An ATP-binding site is contributed by 13 to 18 (SGGIDS).

The protein belongs to the tRNA(Ile)-lysidine synthase family.

It localises to the cytoplasm. The enzyme catalyses cytidine(34) in tRNA(Ile2) + L-lysine + ATP = lysidine(34) in tRNA(Ile2) + AMP + diphosphate + H(+). In terms of biological role, ligates lysine onto the cytidine present at position 34 of the AUA codon-specific tRNA(Ile) that contains the anticodon CAU, in an ATP-dependent manner. Cytidine is converted to lysidine, thus changing the amino acid specificity of the tRNA from methionine to isoleucine. The sequence is that of tRNA(Ile)-lysidine synthase from Thermotoga sp. (strain RQ2).